The following is a 99-amino-acid chain: Protein S100-A11 (99 aa).

M1 bears the N-acetylmethionine mark. T8 carries the phosphothreonine modification. EF-hand domains are found at residues 10-47 and 53-88; these read RCIE…ELAA and KDPG…LAIA. Positions 29, 31, 36, 66, 68, 70, 72, and 77 each coordinate Ca(2+).

The protein belongs to the S-100 family. In terms of assembly, homodimer; disulfide-linked. Post-translationally, phosphorylation at Thr-8 significantly suppresses homodimerization and promotes association with NCL/nucleolin which induces nuclear translocation.

It is found in the cytoplasm. It localises to the nucleus. Its function is as follows. Facilitates the differentiation and the cornification of keratinocytes. This chain is Protein S100-A11 (S100A11), found in Sus scrofa (Pig).